The following is a 291-amino-acid chain: NAD kinase (291 aa).

Catalysis depends on Asp-73, which acts as the Proton acceptor. NAD(+) contacts are provided by residues 73–74 (DG), 147–148 (ND), Arg-175, Asp-177, and Gln-246.

It belongs to the NAD kinase family. It depends on a divalent metal cation as a cofactor.

It localises to the cytoplasm. The enzyme catalyses NAD(+) + ATP = ADP + NADP(+) + H(+). Functionally, involved in the regulation of the intracellular balance of NAD and NADP, and is a key enzyme in the biosynthesis of NADP. Catalyzes specifically the phosphorylation on 2'-hydroxyl of the adenosine moiety of NAD to yield NADP. The sequence is that of NAD kinase from Laribacter hongkongensis (strain HLHK9).